Reading from the N-terminus, the 136-residue chain is Small ribosomal subunit protein uS8c (136 aa).

This sequence belongs to the universal ribosomal protein uS8 family. In terms of assembly, part of the 30S ribosomal subunit.

It localises to the plastid. The protein resides in the chloroplast. Functionally, one of the primary rRNA binding proteins, it binds directly to 16S rRNA central domain where it helps coordinate assembly of the platform of the 30S subunit. The sequence is that of Small ribosomal subunit protein uS8c (rps8) from Citrus sinensis (Sweet orange).